A 554-amino-acid chain; its full sequence is Hedycaryol synthase (554 aa).

(2E,6E)-farnesyl diphosphate contacts are provided by R270, D307, D311, R449, and D452. Residues D307 and D311 each contribute to the Mg(2+) site. The DDXXD motif signature appears at 307 to 311; that stretch reads DDTYD. Positions 452, 456, and 460 each coordinate Mg(2+).

The protein belongs to the terpene synthase family. The cofactor is Mg(2+). In terms of tissue distribution, specifically expressed in flowers.

The catalysed reaction is (2E,6E)-farnesyl diphosphate + H2O = (2E,6E)-hedycaryol + diphosphate. Its pathway is secondary metabolite biosynthesis; terpenoid biosynthesis. In terms of biological role, sesquiterpene synthase that catalyzes the formation of sesquiterpenes and sesquiterpenoid alcohols. Converts farnesyl diphosphate (FPP) to hedycaryol. Hedycaryol is likely to be one of the terpenes that attract insects for pollination of Camellia brevistyla. This is Hedycaryol synthase from Camellia brevistyla.